The following is a 184-amino-acid chain: Shikimate kinase (184 aa).

Residue 18-23 (GAGKTT) coordinates ATP. Thr22 is a binding site for Mg(2+). Positions 40, 64, and 86 each coordinate substrate. Arg124 contributes to the ATP binding site. Arg143 provides a ligand contact to substrate. Gln160 contacts ATP.

Belongs to the shikimate kinase family. Monomer. Requires Mg(2+) as cofactor.

The protein resides in the cytoplasm. It carries out the reaction shikimate + ATP = 3-phosphoshikimate + ADP + H(+). It functions in the pathway metabolic intermediate biosynthesis; chorismate biosynthesis; chorismate from D-erythrose 4-phosphate and phosphoenolpyruvate: step 5/7. In terms of biological role, catalyzes the specific phosphorylation of the 3-hydroxyl group of shikimic acid using ATP as a cosubstrate. This chain is Shikimate kinase, found in Chromobacterium violaceum (strain ATCC 12472 / DSM 30191 / JCM 1249 / CCUG 213 / NBRC 12614 / NCIMB 9131 / NCTC 9757 / MK).